The chain runs to 48 residues: Fimbrial assembly protein, serogroup E2 (48 aa).

The chain is Fimbrial assembly protein, serogroup E2 (fimB) from Dichelobacter nodosus (Bacteroides nodosus).